A 441-amino-acid chain; its full sequence is MANKYVSSVLKSLLVLLHLVFLSKQHVDSASIVKSLPGFEGQLPFELETGYIGVGEEEEVQLFYYFIKSERNPKEDPLILWLTGGPGCSAISGLLFENGPLTMKLDVYNGTLPSLVSTTYSWTKTSSIIFLDQPVGTGFSYSRTQQFNKPSDSGEAKRIHEFLQKWLGKHQVFSSNPFYVAGDSYSGLVVPATVQEISKGNYECCNPPINLQGYVLGNPLTDYTTGSNSRIPFAHGMALISDELYESLKKTCKGEYTNVHPRNTQCLKFVEEFNKCTNRIFQQLILDPLCETETPDCYIYRYLLTTYWANDATVREALQINKESIGEWVRCYYSIPYNNDIKSSMPYHVNNSISGYRSLIYSGDHDFEVPYLGTQAWIRSLNYSIIDDWRPWMVKNQIAGYTRTYANKMTFATIKGGGHTAESKPEEASIMFQRWINGQPL.

The N-terminal stretch at M1–S29 is a signal peptide. 3 cysteine pairs are disulfide-bonded: C88-C331, C252-C266, and C290-C297. N109 carries an N-linked (GlcNAc...) asparagine glycan. S184 is an active-site residue. The N-linked (GlcNAc...) asparagine glycan is linked to N350. D366 is a catalytic residue. N382 carries an N-linked (GlcNAc...) asparagine glycan. Residue H419 is part of the active site.

Belongs to the peptidase S10 family. As to expression, expressed in seedlings and roots.

It localises to the secreted. Its function is as follows. Probable carboxypeptidase. The polypeptide is Serine carboxypeptidase-like 1 (SCPL1) (Arabidopsis thaliana (Mouse-ear cress)).